The primary structure comprises 692 residues: Eomesodermin (692 aa).

The disordered stretch occupies residues 35 to 135; sequence NSSTPNLPHT…LNTAVPTSAP (101 aa). The T-box DNA-binding region spans 263-443; the sequence is LWLKFHRHQT…HNPFAKGFRD (181 aa). The interval 578–692 is required for transcription activation; it reads SMAGWGSRGS…LGYYSFYSSS (115 aa). Disordered regions lie at residues 595 to 614 and 621 to 673; these read TSLP…DLLP and EMSS…DIGT. Composition is skewed to low complexity over residues 596-609 and 654-665; these read SLPW…SGFS and SPSTSSNENSPP.

Its subcellular location is the nucleus. Functions as a transcriptional activator playing a crucial role during development. Functions in gastrulation, regulating mesoderm differentiation. Activates wnt8, t/bra, chrd and mix-A/mix.1 expression. The polypeptide is Eomesodermin (eomes) (Xenopus laevis (African clawed frog)).